The following is a 248-amino-acid chain: Probable phosphatase VPA0505 (248 aa).

Residues His8, His10, His16, His41, Glu74, His102, His132, Asp194, and His196 each coordinate Zn(2+).

This sequence belongs to the PHP family. Requires Zn(2+) as cofactor.

The polypeptide is Probable phosphatase VPA0505 (Vibrio parahaemolyticus serotype O3:K6 (strain RIMD 2210633)).